A 447-amino-acid chain; its full sequence is Phosphoglucosamine mutase (447 aa).

Catalysis depends on Ser103, which acts as the Phosphoserine intermediate. Residues Ser103, Asp242, Asp244, and Asp246 each contribute to the Mg(2+) site. Residue Ser103 is modified to Phosphoserine.

The protein belongs to the phosphohexose mutase family. Mg(2+) serves as cofactor. In terms of processing, activated by phosphorylation.

It carries out the reaction alpha-D-glucosamine 1-phosphate = D-glucosamine 6-phosphate. Catalyzes the conversion of glucosamine-6-phosphate to glucosamine-1-phosphate. The sequence is that of Phosphoglucosamine mutase from Cereibacter sphaeroides (strain ATCC 17025 / ATH 2.4.3) (Rhodobacter sphaeroides).